Here is a 629-residue protein sequence, read N- to C-terminus: RNA polymerase sigma factor RpoD (629 aa).

The tract at residues 183 to 228 (HNGLDEDFSDEDDEEESSNADVEDNEDEEDNESESTSDSSDSDNSI) is disordered. Acidic residues predominate over residues 187-228 (DEDFSDEDDEEESSNADVEDNEDEEDNESESTSDSSDSDNSI). The segment at 395 to 465 (MVEANLRLVI…TRSIADQART (71 aa)) is sigma-70 factor domain-2. An Interaction with polymerase core subunit RpoC motif is present at residues 419-422 (DLIQ). Residues 474-550 (ETINKLNRIS…DSTLELPLDS (77 aa)) are sigma-70 factor domain-3. A sigma-70 factor domain-4 region spans residues 563–616 (VLEGLTPREAKVLRMRFGIDMNTDHTLEEVGKQFDVTRERIRQIEAKALRKLRH). The H-T-H motif DNA-binding region spans 589–608 (LEEVGKQFDVTRERIRQIEA).

The protein belongs to the sigma-70 factor family. RpoD/SigA subfamily. In terms of assembly, interacts transiently with the RNA polymerase catalytic core.

It localises to the cytoplasm. In terms of biological role, sigma factors are initiation factors that promote the attachment of RNA polymerase to specific initiation sites and are then released. This sigma factor is the primary sigma factor during exponential growth. The polypeptide is RNA polymerase sigma factor RpoD (Haemophilus influenzae (strain ATCC 51907 / DSM 11121 / KW20 / Rd)).